The primary structure comprises 210 residues: Glutathione S-transferase P (210 aa).

The 80-residue stretch at 2–81 (ASYTIVYFPV…HLGRTLGLYG (80 aa)) folds into the GST N-terminal domain. A Phosphotyrosine; by EGFR modification is found at Y4. Glutathione-binding positions include Y8, R14, W39, K45, and 52-53 (QL). A Phosphothreonine modification is found at T62. 65–66 (QS) is a binding site for glutathione. Positions 83–204 (DQREAALVDM…ASPEHVNRPI (122 aa)) constitute a GST C-terminal domain. N6-succinyllysine occurs at positions 103 and 116. The residue at position 128 (K128) is an N6-acetyllysine.

The protein belongs to the GST superfamily. Pi family. As to quaternary structure, homodimer. Interacts with CDK5.

It localises to the cytoplasm. Its subcellular location is the mitochondrion. It is found in the nucleus. The catalysed reaction is RX + glutathione = an S-substituted glutathione + a halide anion + H(+). It catalyses the reaction prostaglandin J2 + glutathione = prostaglandin J2-S-(R)-glutathione. The enzyme catalyses prostaglandin J2 + glutathione = prostaglandin J2-S-(S)-glutathione. It carries out the reaction prostaglandin A2 + glutathione = prostaglandin A2-S-(S)-glutathione. The catalysed reaction is 11(S)-hydroxy-14(S),15(S)-epoxy-(5Z,8Z,12E)-eicosatrienoate + glutathione = (11S,15S)-dihydroxy-14(R)-S-glutathionyl-(5Z,8Z,12E)-eicosatrienoate. Its function is as follows. Conjugation of reduced glutathione to a wide number of exogenous and endogenous hydrophobic electrophiles. Involved in the formation of glutathione conjugates of both prostaglandin A2 (PGA2) and prostaglandin J2 (PGJ2). Participates in the formation of novel hepoxilin regioisomers. Negatively regulates CDK5 activity via p25/p35 translocation to prevent neurodegeneration. This Capra hircus (Goat) protein is Glutathione S-transferase P (GSTP1).